The chain runs to 115 residues: Con-Ins G1a (115 aa).

The first 24 residues, 1-24, serve as a signal peptide directing secretion; that stretch reads MTTSSYFLLMALGLLLYVCQSSFG. Residues 25 to 29 constitute a propeptide that is removed on maturation; that stretch reads NQHTR. Pro34 is subject to 4-hydroxyproline; partial. Intrachain disulfides connect Cys38-Cys101, Cys50-Cys114, and Cys100-Cys105. 4-carboxyglutamate is present on Glu41. A propeptide spans 53–94 (c peptide); that stretch reads KRNDAGEKRGRASPLWQRRGSLSKLKARAKRNGAFHLPRDGR. Residue Glu98 is modified to 4-carboxyglutamate. Position 104 is a 4-hydroxyproline; partial (Pro104). 4-carboxyglutamate; partial is present on Glu109. The residue at position 114 (Cys114) is a Cysteine amide.

This sequence belongs to the insulin family. Heterodimer of A and B chains; disulfide-linked. Expressed by the venom gland.

Its subcellular location is the secreted. Its function is as follows. This venom insulin, from a fish-hunting cone snail, facilitates prey capture by rapidly inducing hypoglycemic shock. It is one of the smallest known insulin found in nature and lacks the C-terminal segment of the B chain that, in human insulin, mediates engagement of the insulin receptor (INSR) and assembly of the hormone's hexameric storage form. Despite lacking this segment, it both binds and activates human insulin receptor (long isoform (HIR-B)) with a high potency (EC(50)=16.28 nM). In vivo, intraperitoneal injection of this peptide into zebrafish lowers blood glucose with the same potency than human insulin. In addition, when applied to water, this peptide reduces overall locomotor activity of zebrafish larvae, observed as a significant decrease in the percentage of time spent swimming and movement frequency. When tested on a mouse model of diabetes, this insulin also lowers blood glucose with a 10-fold lower potency than human insulin. The polypeptide is Con-Ins G1a (Conus geographus (Geography cone)).